The sequence spans 743 residues: Tudor domain-containing protein 3 (743 aa).

The segment at 241-262 (KTFGGGGGGARSNLNIGAAGHR) is disordered. One can recognise a UBA domain in the interval 286–326 (LVDEKALKHITEMGFSKEASRQALMDNANNLEAALNVLLNS). Disordered stretches follow at residues 327-365 (SKQK…APST) and 380-549 (EEPK…CYER). A Phosphoserine modification is found at Ser349. A compositionally biased stretch (basic and acidic residues) spans 414–431 (PRNDTRQPRNERPPRFQK). Positions 432–445 (DTPTSKSTVENSVL) are enriched in polar residues. Position 438 is a phosphoserine (Ser438). 2 stretches are compositionally biased toward basic and acidic residues: residues 464–484 (AEER…KDAS) and 536–549 (RENQ…CYER). Lys563 is covalently cross-linked (Glycyl lysine isopeptide (Lys-Gly) (interchain with G-Cter in SUMO2)). The interval 572 to 603 (TDYPRPVQSNSLGVPNGETAPPLKGRRVGPIK) is disordered. The Tudor domain occupies 647 to 707 (VWKPGDECFA…KPVQTEAWEE (61 aa)). Over residues 711 to 725 (YDHTIEFRRGGDGQP) the composition is skewed to basic and acidic residues. The disordered stretch occupies residues 711–743 (YDHTIEFRRGGDGQPRRSTRPTQQFYQPPRARN). The EBM motif; may mediate interaction with the EJC stretch occupies residues 723–743 (GQPRRSTRPTQQFYQPPRARN).

Component of mRNA stress granules. Interacts with FMR1, FXR1, FXR2, EWSR1, FUS, SERBP1, EEF1A1 and DDX3X or DDX3Y, and with the small nuclear ribonucleoprotein-associated proteins SNRPB and SNRPN. Interacts with 'Lys-48'-linked tetra-ubiquitin, but not with monoubiquitin or 'Lys-63'-linked ubiquitin chains. May interact with the exon junction complex (EJC) composed at least of CASC3, EIF4A3, MAGOH and RBM8A. Interacts with POLR2A (via the C-terminal domain (CTD)).

It is found in the cytoplasm. The protein resides in the nucleus. Scaffolding protein that specifically recognizes and binds dimethylarginine-containing proteins. Plays a role in the regulation of translation of target mRNAs by binding Arg/Gly-rich motifs (GAR) in dimethylarginine-containing proteins. In nucleus, acts as a coactivator: recognizes and binds asymmetric dimethylation on the core histone tails associated with transcriptional activation (H3R17me2a and H4R3me2a) and recruits proteins at these arginine-methylated loci. In cytoplasm, acts as an antiviral factor that participates in the assembly of stress granules together with G3BP1. In Mus musculus (Mouse), this protein is Tudor domain-containing protein 3 (Tdrd3).